Consider the following 97-residue polypeptide: Nucleoid-associated protein Hac_0048 (97 aa).

This sequence belongs to the YbaB/EbfC family. As to quaternary structure, homodimer.

The protein resides in the cytoplasm. The protein localises to the nucleoid. Functionally, binds to DNA and alters its conformation. May be involved in regulation of gene expression, nucleoid organization and DNA protection. The protein is Nucleoid-associated protein Hac_0048 of Helicobacter acinonychis (strain Sheeba).